Here is a 428-residue protein sequence, read N- to C-terminus: MDTERGSISSSEISRTAHLQDRTVACLPPSYGQLVTILSIDGGGIRGIIPGTILAYLESQLQELDGEEARLVDYFDVISGTSTGGLIVAMLTAQDQSGGHSRNSNRPLFEAKEIVPFYLKHSPKIFPQPRGIFCGWGETIVRLVGGPKFNGKYLHDLVEGFLGDTKLTQSLTNVVIPCFDIKKLQPVIFSSYQAVNNQAMNAKLSDICISTSAAPTFFPAHRFTNEDSEGIKHEFNLIDGGIAANNPTLCAIAEVTKQIIKKNPVMGDISPLDFTRFLVISIGTGSIRNQEKYNAKMASKWGLMCWVFESGSTPILDCYSEAIHDMVDYQSSVVFQALRSEKNYLRIDDDSLKGDLGSVDISTEKNMEGLVEVGEALLKKRVSRVNLESGHYQPISENVTNEEALKRFAKVLSEERKLRESRSPKLKI.

The PNPLA domain occupies 38-252 (LSIDGGGIRG…AANNPTLCAI (215 aa)). The short motif at 42–47 (GGGIRG) is the GXGXXG element. The short motif at 80–84 (GTSTG) is the GXSXG element. Serine 82 (nucleophile) is an active-site residue. Aspartate 239 functions as the Proton acceptor in the catalytic mechanism. The DGA/G signature appears at 239–241 (DGG). Serine 423 is subject to Phosphoserine.

Belongs to the patatin family. As to expression, expressed specifically in the stigma, ovary and funiculus of the ovary.

The protein localises to the cytoplasm. In terms of biological role, possesses non-specific lipolytic acyl hydrolase (LAH) activity. Catalyzes the hydrolysis of the neutral lipids monogalactosyldiacylglycerol (MGDG), digalactosyldiacylglycerol (DGDG) and phosphatidylglycerol (PG), and less efficiently the polar lipids phosphatidylcholine (PC) and phosphatidylinositol (PI), but not the storage lipid triacylglycerol (TAG). May play a role in root development. The polypeptide is Patatin-like protein 3 (PLP3) (Arabidopsis thaliana (Mouse-ear cress)).